Consider the following 39-residue polypeptide: Potassium channel toxin alpha-KTx 31.1 (39 aa).

3 cysteine pairs are disulfide-bonded: Cys7/Cys30, Cys13/Cys35, and Cys17/Cys37.

It belongs to the short scorpion toxin superfamily. Potassium channel inhibitor family. Alpha-KTx 31 subfamily. Expressed by the venom gland.

The protein localises to the secreted. Its function is as follows. Voltage-gated potassium channel inhibitor. 1 uM of the native toxin inhibits rat Kv1.2/KCNA2 (100% inhibition), and drosophila Shaker IR/Sh (100%), human Kv1.3/KCNA3 (83%), rat Kv1.1/KCNA1 (32%) and rat Kv1.6/KCNA6 (21%). The sequence is that of Potassium channel toxin alpha-KTx 31.1 from Buthus occitanus tunetanus (Common European scorpion).